Here is a 398-residue protein sequence, read N- to C-terminus: S-adenosylmethionine synthase (398 aa).

Residue 136 to 141 (GTGSSD) coordinates ATP.

This sequence belongs to the AdoMet synthase 2 family. Mg(2+) is required as a cofactor.

The enzyme catalyses L-methionine + ATP + H2O = S-adenosyl-L-methionine + phosphate + diphosphate. Its pathway is amino-acid biosynthesis; S-adenosyl-L-methionine biosynthesis; S-adenosyl-L-methionine from L-methionine: step 1/1. Catalyzes the formation of S-adenosylmethionine from methionine and ATP. The chain is S-adenosylmethionine synthase from Methanosarcina mazei (strain ATCC BAA-159 / DSM 3647 / Goe1 / Go1 / JCM 11833 / OCM 88) (Methanosarcina frisia).